The chain runs to 387 residues: 3-ketoacyl-CoA thiolase (387 aa).

Cys-91 serves as the catalytic Acyl-thioester intermediate. Catalysis depends on proton acceptor residues His-343 and Cys-373.

This sequence belongs to the thiolase-like superfamily. Thiolase family. In terms of assembly, heterotetramer of two alpha chains (FadB) and two beta chains (FadA).

The protein localises to the cytoplasm. It carries out the reaction an acyl-CoA + acetyl-CoA = a 3-oxoacyl-CoA + CoA. The protein operates within lipid metabolism; fatty acid beta-oxidation. Catalyzes the final step of fatty acid oxidation in which acetyl-CoA is released and the CoA ester of a fatty acid two carbons shorter is formed. The sequence is that of 3-ketoacyl-CoA thiolase from Salmonella choleraesuis (strain SC-B67).